Here is a 95-residue protein sequence, read N- to C-terminus: UPF0235 protein Pcar_0617 (95 aa).

Belongs to the UPF0235 family.

This Syntrophotalea carbinolica (strain DSM 2380 / NBRC 103641 / GraBd1) (Pelobacter carbinolicus) protein is UPF0235 protein Pcar_0617.